The primary structure comprises 126 residues: Protein ApaG (126 aa).

Residues 2-126 form the ApaG domain; sequence NQRLSPIKVE…FSLAVPGLLH (125 aa).

The polypeptide is Protein ApaG (Shewanella piezotolerans (strain WP3 / JCM 13877)).